A 275-amino-acid chain; its full sequence is Elongation factor Ts (275 aa).

The tract at residues threonine 76 to valine 79 is involved in Mg(2+) ion dislocation from EF-Tu.

The protein belongs to the EF-Ts family.

It localises to the cytoplasm. Its function is as follows. Associates with the EF-Tu.GDP complex and induces the exchange of GDP to GTP. It remains bound to the aminoacyl-tRNA.EF-Tu.GTP complex up to the GTP hydrolysis stage on the ribosome. This Mycolicibacterium paratuberculosis (strain ATCC BAA-968 / K-10) (Mycobacterium paratuberculosis) protein is Elongation factor Ts.